Consider the following 531-residue polypeptide: Basal body-orientation factor 1 (531 aa).

A compositionally biased stretch (basic residues) spans 1 to 19 (MPKLKVKAGKGKKGKRKKA). The interval 1-32 (MPKLKVKAGKGKKGKRKKAGKNEHRLDKESEV) is disordered. A compositionally biased stretch (basic and acidic residues) spans 20 to 32 (GKNEHRLDKESEV). 2 coiled-coil regions span residues 26-213 (LDKE…AEKA) and 274-365 (VQEK…VESF). Positions 465–505 (QSRKSPGLKPSPPADVSSIKEKEINTSNLEEKPEESSSTFI) are disordered. The span at 482 to 499 (SIKEKEINTSNLEEKPEE) shows a compositional bias: basic and acidic residues.

This sequence belongs to the BBOF1 family. In terms of tissue distribution, multiciliated cells.

The protein resides in the cytoplasm. It localises to the cytoskeleton. The protein localises to the cilium basal body. Basal body protein required in multiciliate cells to align and maintain cilia orientation in response to flow. May act by mediating a maturation step that stabilizes and aligns cilia orientation. Not required to respond to planar cell polarity (PCP) or flow-based orientation cues. The polypeptide is Basal body-orientation factor 1 (ccdc176) (Xenopus laevis (African clawed frog)).